Consider the following 316-residue polypeptide: Coproporphyrin III ferrochelatase (316 aa).

Residues tyrosine 13, arginine 30, 46 to 47, serine 54, and tyrosine 125 contribute to the Fe-coproporphyrin III site; that span reads RY. Fe(2+)-binding residues include histidine 183 and glutamate 264.

The protein belongs to the ferrochelatase family.

The protein localises to the cytoplasm. The catalysed reaction is Fe-coproporphyrin III + 2 H(+) = coproporphyrin III + Fe(2+). The protein operates within porphyrin-containing compound metabolism; protoheme biosynthesis. Its function is as follows. Involved in coproporphyrin-dependent heme b biosynthesis. Catalyzes the insertion of ferrous iron into coproporphyrin III to form Fe-coproporphyrin III. The sequence is that of Coproporphyrin III ferrochelatase from Geobacillus kaustophilus (strain HTA426).